Consider the following 339-residue polypeptide: Phenylalanine--tRNA ligase alpha subunit (339 aa).

Glu254 lines the Mg(2+) pocket.

This sequence belongs to the class-II aminoacyl-tRNA synthetase family. Phe-tRNA synthetase alpha subunit type 1 subfamily. In terms of assembly, tetramer of two alpha and two beta subunits. Mg(2+) serves as cofactor.

It is found in the cytoplasm. The catalysed reaction is tRNA(Phe) + L-phenylalanine + ATP = L-phenylalanyl-tRNA(Phe) + AMP + diphosphate + H(+). The chain is Phenylalanine--tRNA ligase alpha subunit from Dictyoglomus turgidum (strain DSM 6724 / Z-1310).